The sequence spans 278 residues: Putative non-heme haloperoxidase (278 aa).

An AB hydrolase-1 domain is found at 24 to 240 (PLVFLHGLSV…STAKITNASF (217 aa)). Active-site residues include serine 97 and aspartate 221.

It belongs to the AB hydrolase superfamily.

The chain is Putative non-heme haloperoxidase (59.2) from Mycobacterium (Mycobacteriophage D29).